Consider the following 46-residue polypeptide: Mu-hexatoxin-Mg2a (46 aa).

5 disulfide bridges follow: C3/C18, C10/C24, C17/C36, C21/C43, and C26/C34.

It belongs to the neurotoxin 02 (plectoxin) family. 02 (plectoxin) subfamily. As to expression, expressed by the venom gland.

The protein localises to the secreted. Competes for binding at site 3 of the insect voltage-gated sodium channel (Nav). Insecticidal neurotoxin. Causes temporary paralysis to lepidopteran larvae (10.3 nmol/g) or to crickets (doses from 0.93 to 119 ug/g). Is not toxic to mice when injected intracranially (high doses). This is Mu-hexatoxin-Mg2a from Macrothele gigas (Japanese funnel web spider).